Here is a 171-residue protein sequence, read N- to C-terminus: Zinc uptake regulation protein (171 aa).

The protein belongs to the Fur family.

Acts as a negative controlling element, employing Zn(2+) as a cofactor to bind the operator of the repressed genes (znuACB). This chain is Zinc uptake regulation protein (zur), found in Escherichia coli (strain K12).